Consider the following 558-residue polypeptide: MAGPLPPLNQEPAFQKLQEYYDSKAKDLNIKDLFVKDSKRFSKYSLRLHTQNDGEILLDYSKNRINDEVWDLLLALAKVRRVNAARDAMFSGQHINITENRAVLHTALRNRGTDPVLVDDKDVMPDVRAELAHMKEFTNMVISGVWRGCTGKQITDVVNIGIGGSDLGPLMVTEALKPYGKGLHSHFVSNIDGTHLAEVLKKVNYETTLFIVASKTFTTQETITNATSAKTWLLEHSKEPESVAKHFVALSTNKEKVTEFGIDSTNMFGFWDWVGGRYSLWSAIGLSICLSIGFENFEQLLDGAHFMDNHFKTTPFEKNAPVILALLGVWYSNFFKAETHALLPYDQYLHRFAAYFQQGDMESNGKFVSKSGKPVKYSTGPIVWGEPGTNGQHAFYQLIHQGTRLIPCDFIAPAQTHNPIAGGKHHKILLSNFLAQTEALMAGKTVDEARTELSKAGLCGNELDNLLPHKVFVGNRPTNSIVVKKVSPFTLGALIALYEHKIFVQGIIWDINSFDQWGVELGKQLAKAIEPELDHCNEVSTHDSSTNGLINFIKANWK.

Residue Glu362 is the Proton donor of the active site. Active-site residues include His393 and Lys523.

It belongs to the GPI family.

It localises to the cytoplasm. It catalyses the reaction alpha-D-glucose 6-phosphate = beta-D-fructose 6-phosphate. It functions in the pathway carbohydrate degradation; glycolysis; D-glyceraldehyde 3-phosphate and glycerone phosphate from D-glucose: step 2/4. The polypeptide is Glucose-6-phosphate isomerase (Pgi) (Drosophila simulans (Fruit fly)).